Here is a 360-residue protein sequence, read N- to C-terminus: MIIWLAELLQPYFSFFRLFEYLSFRAIVSILTALGISLWMGPRMIKRLQMLQIGQVVRNEGPESHFSKRGTPTMGGVMILAAITITVLLWADLTNPYVWAVLAVLLGYGAVGFVDDYRKVVRKNTDGLIARWKYFWQSAIALVVAFALYAHGQDTAATQLVVPFFKDVMPQLGLMYIVLTYFVIVGTSNAVNLTDGLDGLAIMPTVLVAAGFAAIAWATGNVNFANYLHIPYIPHSSELVVVCTAMVGAGLGFLWFNTYPAQVFMGDVGALALGGALGTIAVLVRQEFVLVIMGGVFVMETLSVILQVGSYKLRGQRIFRMAPIHHHYELKGWPEPRVIVRFWIISIVLVLIGLATLKVR.

The next 10 helical transmembrane spans lie at 21-41, 73-93, 94-114, 132-152, 168-188, 199-219, 239-259, 263-283, 288-308, and 338-358; these read YLSF…LWMG, TMGG…WADL, TNPY…VGFV, WKYF…YAHG, VMPQ…VGTS, GLAI…AWAT, LVVV…FNTY, VFMG…IAVL, FVLV…ILQV, and VIVR…ATLK.

Belongs to the glycosyltransferase 4 family. MraY subfamily. Mg(2+) is required as a cofactor.

The protein resides in the cell inner membrane. It carries out the reaction UDP-N-acetyl-alpha-D-muramoyl-L-alanyl-gamma-D-glutamyl-meso-2,6-diaminopimeloyl-D-alanyl-D-alanine + di-trans,octa-cis-undecaprenyl phosphate = di-trans,octa-cis-undecaprenyl diphospho-N-acetyl-alpha-D-muramoyl-L-alanyl-D-glutamyl-meso-2,6-diaminopimeloyl-D-alanyl-D-alanine + UMP. The protein operates within cell wall biogenesis; peptidoglycan biosynthesis. Functionally, catalyzes the initial step of the lipid cycle reactions in the biosynthesis of the cell wall peptidoglycan: transfers peptidoglycan precursor phospho-MurNAc-pentapeptide from UDP-MurNAc-pentapeptide onto the lipid carrier undecaprenyl phosphate, yielding undecaprenyl-pyrophosphoryl-MurNAc-pentapeptide, known as lipid I. In Vibrio cholerae serotype O1 (strain M66-2), this protein is Phospho-N-acetylmuramoyl-pentapeptide-transferase.